The chain runs to 164 residues: Large ribosomal subunit protein uL10 (164 aa).

This sequence belongs to the universal ribosomal protein uL10 family. As to quaternary structure, part of the ribosomal stalk of the 50S ribosomal subunit. The N-terminus interacts with L11 and the large rRNA to form the base of the stalk. The C-terminus forms an elongated spine to which L12 dimers bind in a sequential fashion forming a multimeric L10(L12)X complex.

Its function is as follows. Forms part of the ribosomal stalk, playing a central role in the interaction of the ribosome with GTP-bound translation factors. The protein is Large ribosomal subunit protein uL10 of Pseudoalteromonas translucida (strain TAC 125).